Consider the following 404-residue polypeptide: Magnesium transporter NIPA4 (404 aa).

At 1–55 (MELRVSNTSCENGSLLHLYCSSQEVLCQIVNDLSPEVPSNATFHSWQERIRQNYG) the chain is on the extracellular side. N-linked (GlcNAc...) asparagine glycosylation is found at asparagine 7, asparagine 12, and asparagine 40. Residues 56 to 76 (FYIGLGLAFLSSFLIGSSVIL) form a helical membrane-spanning segment. The Cytoplasmic segment spans residues 77 to 102 (KKKGLLRLVATGATRAVDGGFGYLKD). A helical membrane pass occupies residues 103–123 (AMWWAGFLTMAAGEVANFGAY). Position 124 (alanine 124) is a topological domain, extracellular. Residues 125–145 (FAPATVVTPLGALSVLISAIL) form a helical membrane-spanning segment. At 146–153 (SSYFLRES) the chain is on the cytoplasmic side. The chain crosses the membrane as a helical span at residues 154–174 (LNLLGKLGCVICVAGSTVMVI). Residues 175-195 (HAPEEEKVTTIMEMASKMKDT) lie on the Extracellular side of the membrane. Residues 196-216 (GFIVFAVLLLVSCLILIFVIA) form a helical membrane-spanning segment. The Cytoplasmic portion of the chain corresponds to 217-223 (PRYGQRN). The helical transmembrane segment at 224–244 (ILIYIIICSVIGAFSVAAVKG) threads the bilayer. At 245 to 261 (LGITIKNFFQGLPVVRH) the chain is on the extracellular side. The chain crosses the membrane as a helical span at residues 262 to 282 (PLPYILSLILALSLSTQVNFL). The Cytoplasmic segment spans residues 283–293 (NRALDIFNTSL). The helical transmembrane segment at 294-314 (VFPIYYVFFTTVVVTSSIILF) threads the bilayer. Residues 315–324 (KEWYSMSAVD) lie on the Extracellular side of the membrane. The chain crosses the membrane as a helical span at residues 325–345 (IAGTLSGFVTIILGVFMLHAF). Residues 346 to 404 (KDLDISCASLPHMHKNPPPSPAPEPTVIRLEDKNVLVDNIELASTSSPEEKPKVFIIHS) lie on the Cytoplasmic side of the membrane.

The protein belongs to the NIPA family. As to expression, highly expressed in brain, lung, stomach, keratinocytes and leukocytes, and in all other tissues tested except liver, thyroid and fetal brain.

The protein localises to the cell membrane. The enzyme catalyses Mg(2+)(in) = Mg(2+)(out). Functionally, acts as a Mg(2+) transporter. Can also transport other divalent cations such as Ba(2+), Sr(2+) and Fe(2+) but to a much less extent than Mg(2+). May be a receptor for ligands (trioxilins A3 and B3) from the hepoxilin pathway. The chain is Magnesium transporter NIPA4 (NIPAL4) from Homo sapiens (Human).